The following is a 118-amino-acid chain: Ribonuclease P protein component (118 aa).

The protein belongs to the RnpA family. As to quaternary structure, consists of a catalytic RNA component (M1 or rnpB) and a protein subunit.

It carries out the reaction Endonucleolytic cleavage of RNA, removing 5'-extranucleotides from tRNA precursor.. Functionally, RNaseP catalyzes the removal of the 5'-leader sequence from pre-tRNA to produce the mature 5'-terminus. It can also cleave other RNA substrates such as 4.5S RNA. The protein component plays an auxiliary but essential role in vivo by binding to the 5'-leader sequence and broadening the substrate specificity of the ribozyme. The polypeptide is Ribonuclease P protein component (Mycoplasma pneumoniae (strain ATCC 29342 / M129 / Subtype 1) (Mycoplasmoides pneumoniae)).